We begin with the raw amino-acid sequence, 296 residues long: Cytidine deaminase (296 aa).

2 CMP/dCMP-type deaminase domains span residues 47–167 (ELNE…FGPS) and 186–296 (DSND…VEPE). Position 88–90 (88–90 (NIE)) interacts with substrate. His-101 contacts Zn(2+). The active-site Proton donor is Glu-103. Zn(2+) is bound by residues Cys-128 and Cys-131.

This sequence belongs to the cytidine and deoxycytidylate deaminase family. Homodimer. The cofactor is Zn(2+).

The catalysed reaction is cytidine + H2O + H(+) = uridine + NH4(+). The enzyme catalyses 2'-deoxycytidine + H2O + H(+) = 2'-deoxyuridine + NH4(+). In terms of biological role, this enzyme scavenges exogenous and endogenous cytidine and 2'-deoxycytidine for UMP synthesis. This Shewanella halifaxensis (strain HAW-EB4) protein is Cytidine deaminase.